The sequence spans 175 residues: MKIFSWVQRKLSGKKRVPTSDSSQEPSSPPLSKEVQGLPQDEETFLAIGTLGNNIFPKQEEEEEETDSSKDITPVNTDVTIGKKKSLSFLLKKMFVCTSGFKTPPPLLDLSRGDSLHNTRMEKMLRTILNKKIHPQRSNSIAKKYLESNHKIMDEARSSVDANKWVKTDSECEIF.

Residues 9-39 form a disordered region; sequence RKLSGKKRVPTSDSSQEPSSPPLSKEVQGLP. An IGT motif motif is present at residues 44–50; that stretch reads TFLAIGT.

The protein belongs to the LAZY family. As to expression, specifically expressed in roots. Expressed in root tips of young seedlings.

Functionally, involved in the regulation of root gravitropism. Functions redundantly with LAZY2 and LAZY4 in the control of root gravitropism. Functions redundantly with LAZY1, LAZY2 and LAZY4 to control plant architecture by coupling gravity sensing to the formation of auxin gradients. The chain is Protein LAZY 3 from Arabidopsis thaliana (Mouse-ear cress).